Here is a 569-residue protein sequence, read N- to C-terminus: Cationic amino acid transporter 9, chloroplastic (569 aa).

The N-terminal 41 residues, 1-41 (MGGHEGFSNQRLSSATWFSHFRASALRSKSLPPPSSQTAVR), are a transit peptide targeting the chloroplast. 14 helical membrane-spanning segments follow: residues 53 to 73 (GLFD…VFVV), 81 to 101 (AGPG…LNAL), 113 to 135 (VVGG…LVFV), 155 to 175 (YAVA…LWMG), 181 to 201 (LGGL…LTLV), 215 to 235 (VMTA…AFEI), 250 to 270 (AVLT…AVAN), 284 to 304 (IGIM…CLVL), 333 to 353 (ILIS…GLYV), 406 to 428 (HILS…ALRL), 444 to 464 (WQEG…AGVF), 467 to 487 (FSAS…ASAV), 502 to 522 (FSCP…IFLF), and 528 to 548 (EAWI…ALYG).

This sequence belongs to the amino acid-polyamine-organocation (APC) superfamily. Cationic amino acid transporter (CAT) (TC 2.A.3.3) family. In terms of tissue distribution, expressed in roots, stems, flowers, and leaves.

The protein resides in the plastid. Its subcellular location is the chloroplast membrane. Its function is as follows. Permease involved in the transport of the cationic amino acids. In Arabidopsis thaliana (Mouse-ear cress), this protein is Cationic amino acid transporter 9, chloroplastic (CAT9).